The primary structure comprises 20 residues: T cell receptor alpha joining 3 (20 aa).

Alpha-beta TR is a heterodimer composed of an alpha and beta chain; disulfide-linked. The alpha-beta TR is associated with the transmembrane signaling CD3 coreceptor proteins to form the TR-CD3 (TcR or TCR). The assembly of alpha-beta TR heterodimers with CD3 occurs in the endoplasmic reticulum where a single alpha-beta TR heterodimer associates with one CD3D-CD3E heterodimer, one CD3G-CD3E heterodimer and one CD247 homodimer forming a stable octameric structure. CD3D-CD3E and CD3G-CD3E heterodimers preferentially associate with TR alpha and TR beta chains, respectively. The association of the CD247 homodimer is the last step of TcR assembly in the endoplasmic reticulum and is required for transport to the cell surface.

The protein localises to the cell membrane. In terms of biological role, j region of the variable domain of T cell receptor (TR) alpha chain that participates in the antigen recognition. Alpha-beta T cell receptors are antigen specific receptors which are essential to the immune response and are present on the cell surface of T lymphocytes. Recognize peptide-major histocompatibility (MH) (pMH) complexes that are displayed by antigen presenting cells (APC), a prerequisite for efficient T cell adaptive immunity against pathogens. Binding of alpha-beta TR to pMH complex initiates TR-CD3 clustering on the cell surface and intracellular activation of LCK that phosphorylates the ITAM motifs of CD3G, CD3D, CD3E and CD247 enabling the recruitment of ZAP70. In turn ZAP70 phosphorylates LAT, which recruits numerous signaling molecules to form the LAT signalosome. The LAT signalosome propagates signal branching to three major signaling pathways, the calcium, the mitogen-activated protein kinase (MAPK) kinase and the nuclear factor NF-kappa-B (NF-kB) pathways, leading to the mobilization of transcription factors that are critical for gene expression and essential for T cell growth and differentiation. The T cell repertoire is generated in the thymus, by V-(D)-J rearrangement. This repertoire is then shaped by intrathymic selection events to generate a peripheral T cell pool of self-MH restricted, non-autoaggressive T cells. Post-thymic interaction of alpha-beta TR with the pMH complexes shapes TR structural and functional avidity. The sequence is that of T cell receptor alpha joining 3 from Homo sapiens (Human).